The primary structure comprises 254 residues: Sugar fermentation stimulation protein homolog (254 aa).

Belongs to the SfsA family.

This is Sugar fermentation stimulation protein homolog from Synechococcus sp. (strain CC9605).